We begin with the raw amino-acid sequence, 238 residues long: Probable transcriptional regulatory protein YeeN (238 aa).

This sequence belongs to the TACO1 family. YeeN subfamily.

The protein localises to the cytoplasm. The protein is Probable transcriptional regulatory protein YeeN of Salmonella typhi.